Reading from the N-terminus, the 247-residue chain is Probable transcriptional regulatory protein LPC_0711 (247 aa).

This sequence belongs to the TACO1 family.

It localises to the cytoplasm. The sequence is that of Probable transcriptional regulatory protein LPC_0711 from Legionella pneumophila (strain Corby).